The following is a 658-amino-acid chain: UvrABC system protein B (658 aa).

Residues 25 to 182 enclose the Helicase ATP-binding domain; the sequence is ESLNGGNSHQ…KGLVDIQYSR (158 aa). 38–45 provides a ligand contact to ATP; that stretch reads GVTGSGKT. The Beta-hairpin motif lies at 91-114; sequence YYDYYQPEAYIPQTDTYIEKDASI. The 167-residue stretch at 429 to 595 folds into the Helicase C-terminal domain; the sequence is QIDDLYSEIN…TVQKKVHDVI (167 aa). Positions 622-657 constitute a UVR domain; that stretch reads KELIAKLQEEMKQAAKELEFEKAAELRDLIMELKTA.

Belongs to the UvrB family. In terms of assembly, forms a heterotetramer with UvrA during the search for lesions. Interacts with UvrC in an incision complex.

It is found in the cytoplasm. In terms of biological role, the UvrABC repair system catalyzes the recognition and processing of DNA lesions. A damage recognition complex composed of 2 UvrA and 2 UvrB subunits scans DNA for abnormalities. Upon binding of the UvrA(2)B(2) complex to a putative damaged site, the DNA wraps around one UvrB monomer. DNA wrap is dependent on ATP binding by UvrB and probably causes local melting of the DNA helix, facilitating insertion of UvrB beta-hairpin between the DNA strands. Then UvrB probes one DNA strand for the presence of a lesion. If a lesion is found the UvrA subunits dissociate and the UvrB-DNA preincision complex is formed. This complex is subsequently bound by UvrC and the second UvrB is released. If no lesion is found, the DNA wraps around the other UvrB subunit that will check the other stand for damage. This chain is UvrABC system protein B, found in Natranaerobius thermophilus (strain ATCC BAA-1301 / DSM 18059 / JW/NM-WN-LF).